We begin with the raw amino-acid sequence, 239 residues long: Peptidyl-tRNA hydrolase (239 aa).

A tRNA-binding site is contributed by Tyr14. His19 acts as the Proton acceptor in catalysis. 3 residues coordinate tRNA: Phe64, Asn66, and Asn112.

This sequence belongs to the PTH family. Monomer.

The protein resides in the cytoplasm. The enzyme catalyses an N-acyl-L-alpha-aminoacyl-tRNA + H2O = an N-acyl-L-amino acid + a tRNA + H(+). Its function is as follows. Hydrolyzes ribosome-free peptidyl-tRNAs (with 1 or more amino acids incorporated), which drop off the ribosome during protein synthesis, or as a result of ribosome stalling. Catalyzes the release of premature peptidyl moieties from peptidyl-tRNA molecules trapped in stalled 50S ribosomal subunits, and thus maintains levels of free tRNAs and 50S ribosomes. In Rhizobium meliloti (strain 1021) (Ensifer meliloti), this protein is Peptidyl-tRNA hydrolase.